Here is a 218-residue protein sequence, read N- to C-terminus: Small ribosomal subunit protein uS3c (218 aa).

One can recognise a KH type-2 domain in the interval 47-118 (VQKNMRTSSG…KLNIAVTRIA (72 aa)).

The protein belongs to the universal ribosomal protein uS3 family. Part of the 30S ribosomal subunit.

It is found in the plastid. The protein localises to the chloroplast. The protein is Small ribosomal subunit protein uS3c (rps3) of Nicotiana tomentosiformis (Tobacco).